The following is an 883-amino-acid chain: Integrator complex subunit 6-B (883 aa).

Residues 3-227 enclose the VWFA domain; that stretch reads ILLFLLDTSA…QCLESLVQKI (225 aa). The Inhibitory loop motif lies at 626–633; it reads MMIDEADE.

It belongs to the Integrator subunit 6 family. In terms of assembly, component of the Integrator complex, composed of core subunits INTS1, INTS2, INTS3, INTS4, INTS5, INTS6, INTS7, INTS8, INTS9/RC74, INTS10, INTS11/CPSF3L, INTS12, INTS13, INTS14 and INTS15. The core complex associates with protein phosphatase 2A subunits PPP2CA and PPP2R1A, to form the Integrator-PP2A (INTAC) complex.

The protein localises to the nucleus. Its subcellular location is the chromosome. Functionally, component of the integrator complex, a multiprotein complex that terminates RNA polymerase II (Pol II) transcription in the promoter-proximal region of genes. The integrator complex provides a quality checkpoint during transcription elongation by driving premature transcription termination of transcripts that are unfavorably configured for transcriptional elongation: the complex terminates transcription by (1) catalyzing dephosphorylation of the C-terminal domain (CTD) of Pol II subunit POLR2A/RPB1 and SUPT5H/SPT5, (2) degrading the exiting nascent RNA transcript via endonuclease activity and (3) promoting the release of Pol II from bound DNA. The integrator complex is also involved in terminating the synthesis of non-coding Pol II transcripts, such as enhancer RNAs (eRNAs), small nuclear RNAs (snRNAs), telomerase RNAs and long non-coding RNAs (lncRNAs). Within the integrator complex, INTS6 acts as a molecular adapter that promotes assembly of protein phosphatase 2A (PP2A) subunits to the integrator core complex, promoting recruitment of PP2A to transcription pause-release checkpoint. This Xenopus laevis (African clawed frog) protein is Integrator complex subunit 6-B (ints6-b).